The sequence spans 149 residues: Large ribosomal subunit protein uL13 (149 aa).

Belongs to the universal ribosomal protein uL13 family. Part of the 50S ribosomal subunit.

This protein is one of the early assembly proteins of the 50S ribosomal subunit, although it is not seen to bind rRNA by itself. It is important during the early stages of 50S assembly. In Borrelia duttonii (strain Ly), this protein is Large ribosomal subunit protein uL13.